The primary structure comprises 783 residues: Aconitate hydratase, mitochondrial (783 aa).

Residues 1-25 (MITTRLARMGALAPKSRLLFGTRGM) constitute a mitochondrion transit peptide. Substrate-binding positions include glutamine 102 and 195–197 (DSH). Positions 388, 451, and 454 each coordinate [4Fe-4S] cluster. Arginine 477 and arginine 482 together coordinate substrate. Residues 524–555 (EFKLKAPTGDGLPSRGYDPGRDTYQAPPTDRS) are disordered. Substrate-binding positions include arginine 610 and 673–674 (SR).

The protein belongs to the aconitase/IPM isomerase family. [4Fe-4S] cluster serves as cofactor.

The protein localises to the mitochondrion. The enzyme catalyses citrate = D-threo-isocitrate. The catalysed reaction is (2R)-homocitrate = cis-homoaconitate + H2O. Its pathway is carbohydrate metabolism; tricarboxylic acid cycle; isocitrate from oxaloacetate: step 2/2. It functions in the pathway amino-acid biosynthesis; L-lysine biosynthesis via AAA pathway; L-alpha-aminoadipate from 2-oxoglutarate: step 2/5. Functionally, catalyzes the isomerization of citrate to isocitrate via cis-aconitate, a step in the citric acid cycle. Also catalyzes the reversible dehydration of (R)-homocitrate to cis-homoaconitate, a step in the alpha-aminoadipate pathway for lysine biosynthesis. The chain is Aconitate hydratase, mitochondrial (acoA) from Emericella nidulans (strain FGSC A4 / ATCC 38163 / CBS 112.46 / NRRL 194 / M139) (Aspergillus nidulans).